Reading from the N-terminus, the 662-residue chain is 72 kDa type IV collagenase (662 aa).

Residues 1–29 (MEARLVWGVLVGPLRVLCVLCCLLGHAIA) form the signal peptide. Positions 30 to 109 (APSPIIKFPG…PRCGNPDVAN (80 aa)) are cleaved as a propeptide — activation peptide. The Cysteine switch motif lies at 100–107 (PRCGNPDV). C102 is a binding site for Zn(2+). The interval 110–221 (YNFFPRKPKW…LWTLGEGQVV (112 aa)) is collagenase-like 1. Ca(2+)-binding residues include D134 and D168. Positions 178 and 180 each coordinate Zn(2+). The Ca(2+) site is built by D185 and G186. H193 serves as a coordination point for Zn(2+). G200, G202, and D204 together coordinate Ca(2+). Residue H206 participates in Zn(2+) binding. Residues D208, D209, and E211 each contribute to the Ca(2+) site. The collagen-binding stretch occupies residues 222 to 396 (RVKYGNADGE…WGFCPDQGYS (175 aa)). Fibronectin type-II domains follow at residues 228–276 (ADGE…FCPH), 286–334 (GDGQ…FCPE), and 344–392 (SEGA…FCPD). 6 disulfide bridges follow: C233-C259, C247-C274, C291-C317, C305-C332, C349-C375, and C363-C390. A collagenase-like 2 region spans residues 397–467 (LFLVAAHEFG…GPTPTLGPVT (71 aa)). Zn(2+) is bound at residue H403. E404 is a catalytic residue. Residues H407 and H413 each coordinate Zn(2+). Residues 414 to 662 (SQDPGALMAP…GSIKSDWLGC (249 aa)) form a required for inhibitor TIMP2 binding region. A disulfide bridge links C471 with C662. Hemopexin repeat units lie at residues 474-518 (DIVF…WPEL), 519-565 (PEKI…GLPP), 567-615 (VQQV…WNAI), and 616-662 (PDNL…WLGC). Positions 478, 523, and 571 each coordinate Ca(2+). N575 is a glycosylation site (N-linked (GlcNAc...) asparagine). Residue D620 participates in Ca(2+) binding. The N-linked (GlcNAc...) asparagine glycan is linked to N644.

It belongs to the peptidase M10A family. Interacts (via the C-terminal hemopexin-like domains-containing region) with the integrin alpha-V/beta-3; the interaction promotes vascular invasion in angiogenic vessels and melamoma cells. Interacts (via the C-terminal PEX domain) with TIMP2 (via the C-terminal); the interaction inhibits the degradation activity. Interacts with GSK3B. Requires Ca(2+) as cofactor. Zn(2+) serves as cofactor. In terms of processing, phosphorylation on multiple sites modulates enzymatic activity. Phosphorylated by PKC in vitro. The propeptide is processed by MMP14 (MT-MMP1) and MMP16 (MT-MMP3). Autocatalytic cleavage in the C-terminal produces the anti-angiogenic peptide, PEX. This processing appears to be facilitated by binding integrin integrinv/beta3.

The protein resides in the secreted. Its subcellular location is the extracellular space. The protein localises to the extracellular matrix. It localises to the membrane. It is found in the nucleus. The catalysed reaction is Cleavage of gelatin type I and collagen types IV, V, VII, X. Cleaves the collagen-like sequence Pro-Gln-Gly-|-Ile-Ala-Gly-Gln.. In terms of biological role, ubiquitinous metalloproteinase that is involved in diverse functions such as remodeling of the vasculature, angiogenesis, tissue repair, tumor invasion, inflammation, and atherosclerotic plaque rupture. As well as degrading extracellular matrix proteins, can also act on several nonmatrix proteins such as big endothelial 1 and beta-type CGRP promoting vasoconstriction. Also cleaves KISS at a Gly-|-Leu bond. Appears to have a role in myocardial cell death pathways. Contributes to myocardial oxidative stress by regulating the activity of GSK3beta. Cleaves GSK3beta in vitro. Involved in the formation of the fibrovascular tissues. PEX, the C-terminal non-catalytic fragment of MMP2, possesses anti-angiogenic and anti-tumor properties and inhibits cell migration and cell adhesion to FGF2 and vitronectin. Ligand for integrin alpha-v/beta3 on the surface of blood vessels. The protein is 72 kDa type IV collagenase (Mmp2) of Rattus norvegicus (Rat).